Here is a 158-residue protein sequence, read N- to C-terminus: MIITEILGNRAQLSADEIAQYTEEKVKLPNLDLVKRIQRVTTDADREIGLRLPSEVKELKDGDILYQNDSLLITVEVLPTDVLVYRPRNTLEMGKVAHSLGNRHLQAQFFGEDSEYGETVMVLQYDHTVEDHLKHVDAQYSREDRVMPEAFRHAEHSH.

This sequence belongs to the UreE family.

The protein localises to the cytoplasm. Involved in urease metallocenter assembly. Binds nickel. Probably functions as a nickel donor during metallocenter assembly. This is Urease accessory protein UreE from Corynebacterium urealyticum (strain ATCC 43042 / DSM 7109).